Here is a 390-residue protein sequence, read N- to C-terminus: MAQQTIESNNKKSVNRGKDIAKDTILTPNFYTTDFEAMEKMDLSINEDELEAICEEFRKDYNRHHFVRNKEFEGAADKIDAETRELFVDFLEGSCTSEFSGFLLYKELSKRIKDKNPLLAECFAHMARDEARHAGFLNKSMNDFGLQLDLGFLTANKDYTYFAPRAIFYATYISEKIGYWRYIAIYRHLEKNPSGKIFPLFNFFENWCQDENRHGDFFDALMKAQPRTVKSLSQKIEIFGYTLKHPIFDYYHRFRYFLNNHPIVSKLWSRFFLLAVFATMYIRDLGTKRNFYGALGLNAREYDQFVINKTNETSAKVFPVVLNVYDKSFYKRLDRIVENGTRLSEIDKKENPNVIKVLSKLPIFISNGYQLIRLYLLKPLESDDFQPSIR.

This sequence belongs to the AcsF family. It depends on Fe cation as a cofactor.

The enzyme catalyses Mg-protoporphyrin IX 13-monomethyl ester + 3 NADPH + 3 O2 + 2 H(+) = 3,8-divinyl protochlorophyllide a + 3 NADP(+) + 5 H2O. The protein operates within porphyrin-containing compound metabolism; chlorophyll biosynthesis (light-independent). Catalyzes the formation of the isocyclic ring in chlorophyll biosynthesis. Mediates the cyclase reaction, which results in the formation of divinylprotochlorophyllide (Pchlide) characteristic of all chlorophylls from magnesium-protoporphyrin IX 13-monomethyl ester (MgPMME). The protein is Magnesium-protoporphyrin IX monomethyl ester [oxidative] cyclase of Prochlorococcus marinus subsp. pastoris (strain CCMP1986 / NIES-2087 / MED4).